We begin with the raw amino-acid sequence, 222 residues long: Tegument protein UL26 (222 aa).

This sequence belongs to the herpesviridae US22 family. In terms of assembly, interacts with UL25. Interacts with ISGylation machinery components ISG15, UBA7 and HERC5; these interactions inhibit global protein ISGylation. ISGylated; ISGylation regulates UL26 stability and inhibits its activities to suppress NF-kappa-B signaling.

The protein resides in the virion tegument. The protein localises to the host nucleus. In terms of biological role, plays a role in the inhibition of host NF-kappa-B. This inhibition affects both the canonical and the non-canonical pathways. Blocks the induction of host IKK phosphorylation. May also influence the normal phosphorylation state of several tegument proteins including pp28 in virions. Also suppresses virus-induced ISGylation independent of its own ISGylation. This Homo sapiens (Human) protein is Tegument protein UL26 (UL26).